A 210-amino-acid chain; its full sequence is UPF0173 protein PF0020 (210 aa).

The protein belongs to the UPF0173 family.

The sequence is that of UPF0173 protein PF0020 from Pyrococcus furiosus (strain ATCC 43587 / DSM 3638 / JCM 8422 / Vc1).